Reading from the N-terminus, the 408-residue chain is Bone morphogenetic protein 4 (408 aa).

The signal sequence occupies residues 1–19 (MIPGNRMLMVVLLCQVLLG). Positions 20–292 (GASHASLIPE…HTLTRRRAKR (273 aa)) are excised as a propeptide. Phosphoserine is present on serine 91. Positions 91-111 (SGEEEEEEQSQGTGLEYPERP) are disordered. N-linked (GlcNAc...) asparagine glycans are attached at residues asparagine 144 and asparagine 209. Positions 281-307 (RGHTLTRRRAKRSPKHHPQRSRKKNKN) are disordered. A compositionally biased stretch (basic residues) spans 284-307 (TLTRRRAKRSPKHHPQRSRKKNKN). 3 disulfides stabilise this stretch: cysteine 308/cysteine 373, cysteine 337/cysteine 405, and cysteine 341/cysteine 407. 2 N-linked (GlcNAc...) asparagine glycosylation sites follow: asparagine 350 and asparagine 365.

It belongs to the TGF-beta family. In terms of assembly, homodimer; disulfide-linked. Interacts with SOSTDC1, GREM2, RGMA, RGMB and RGMC. Part of a complex consisting of TWSG1 and CHRD. Interacts with the serine proteases, HTRA1 and HTRA3; the interaction with either inhibits BMP4-mediated signaling. The HTRA protease activity is required for this inhibition. Interacts with FBN1 (via N-terminal domain) and FBN2. Interacts with type I receptor BMPR1A. Interacts with type II receptor BMPR2. Interacts with FSTL1; this interaction inhibits the activation of the BMP4/Smad1/5/8 signaling pathway. Interacts with SCUBE3. Interacts with TGFBR3. As to expression, in the cochlea, detected in nonprosensory regions and outer sulcus (at protein level). Prior to gastrulation, expressed in the extraembryonic ectoderm. Later, expressed in the extraembryonic mesoderm.

The protein resides in the secreted. Its subcellular location is the extracellular space. The protein localises to the extracellular matrix. Its function is as follows. Growth factor of the TGF-beta superfamily that plays essential roles in many developmental processes, including neurogenesis, vascular development, angiogenesis and osteogenesis. Acts in concert with PTHLH/PTHRP to stimulate ductal outgrowth during embryonic mammary development and to inhibit hair follicle induction. Initiates the canonical BMP signaling cascade by associating with type I receptor BMPR1A and type II receptor BMPR2. Once all three components are bound together in a complex at the cell surface, BMPR2 phosphorylates and activates BMPR1A. In turn, BMPR1A propagates signal by phosphorylating SMAD1/5/8 that travel to the nucleus and act as activators and repressors of transcription of target genes. Positively regulates the expression of odontogenic development regulator MSX1 via inducing the IPO7-mediated import of SMAD1 to the nucleus. Required for MSX1-mediated mesenchymal molar tooth bud development beyond the bud stage, via promoting Wnt signaling. Acts as a positive regulator of odontoblast differentiation during mesenchymal tooth germ formation, expression is repressed during the bell stage by MSX1-mediated inhibition of CTNNB1 signaling. Able to induce its own expression in dental mesenchymal cells and also in the neighboring dental epithelial cells via an MSX1-mediated pathway. Can also signal through non-canonical BMP pathways such as ERK/MAP kinase, PI3K/Akt or SRC cascades. For example, induces SRC phosphorylation which, in turn, activates VEGFR2, leading to an angiogenic response. The protein is Bone morphogenetic protein 4 of Mus musculus (Mouse).